The sequence spans 195 residues: L-rhamnose-binding lectin CSL2 (195 aa).

2 SUEL-type lectin domains span residues 1–97 (TRVV…YTCL) and 104–195 (TCEG…YTCG).

Functionally, L-rhamnose binding lectin. Has hemagglutinating activity towards rabbit erythrocytes and human type B erythrocytes. Hemagglutinating activity is inhibited by smooth-type lipopolysaccharide (LPS) from S.flexneri 1A and E.coli K12, but not by rough-type LPS from S.flexneri, E.coli K12 and E.coli EH100. Agglutinates E.coli K12 and B.subtilis. This is L-rhamnose-binding lectin CSL2 from Oncorhynchus keta (Chum salmon).